A 588-amino-acid polypeptide reads, in one-letter code: Adenine deaminase (588 aa).

This sequence belongs to the metallo-dependent hydrolases superfamily. Adenine deaminase family. Homodimer. The cofactor is Mn(2+).

It carries out the reaction adenine + H2O + H(+) = hypoxanthine + NH4(+). This chain is Adenine deaminase, found in Escherichia coli O139:H28 (strain E24377A / ETEC).